A 126-amino-acid chain; its full sequence is Fumarate reductase subunit C (126 aa).

Transmembrane regions (helical) follow at residues 30-50, 64-84, and 105-125; these read IFVA…GAGG, VVVV…VTWF, and VLAG…WMVL.

It belongs to the FrdC family. In terms of assembly, part of an enzyme complex containing four subunits: a flavoprotein (FrdA), an iron-sulfur protein (FrdB), and two hydrophobic anchor proteins (FrdC and FrdD).

The protein resides in the cell membrane. Anchors the catalytic components of the fumarate reductase complex to the cell membrane, binds quinones. This Mycobacterium tuberculosis (strain ATCC 25177 / H37Ra) protein is Fumarate reductase subunit C.